The primary structure comprises 72 residues: Large ribosomal subunit protein bL31 (72 aa).

Residues cysteine 16, cysteine 18, cysteine 38, and cysteine 41 each contribute to the Zn(2+) site.

It belongs to the bacterial ribosomal protein bL31 family. Type A subfamily. As to quaternary structure, part of the 50S ribosomal subunit. The cofactor is Zn(2+).

In terms of biological role, binds the 23S rRNA. The chain is Large ribosomal subunit protein bL31 from Vibrio cholerae serotype O1 (strain ATCC 39541 / Classical Ogawa 395 / O395).